We begin with the raw amino-acid sequence, 222 residues long: PKHD-type hydroxylase P9301_13621 (222 aa).

The 95-residue stretch at 81-175 (KIHGIMFTKS…RLVCVGWIES (95 aa)) folds into the Fe2OG dioxygenase domain. Fe cation-binding residues include H99, D101, and H156. Residue R166 coordinates 2-oxoglutarate.

Fe(2+) is required as a cofactor. Requires L-ascorbate as cofactor.

This Prochlorococcus marinus (strain MIT 9301) protein is PKHD-type hydroxylase P9301_13621.